The primary structure comprises 197 residues: Pyridoxal 5'-phosphate synthase subunit PdxT (197 aa).

Residue 53-55 (GES) coordinates L-glutamine. Cysteine 85 serves as the catalytic Nucleophile. L-glutamine contacts are provided by residues arginine 114 and 142 to 143 (IR). Catalysis depends on charge relay system residues histidine 179 and glutamate 181.

Belongs to the glutaminase PdxT/SNO family. As to quaternary structure, in the presence of PdxS, forms a dodecamer of heterodimers. Only shows activity in the heterodimer.

The enzyme catalyses aldehydo-D-ribose 5-phosphate + D-glyceraldehyde 3-phosphate + L-glutamine = pyridoxal 5'-phosphate + L-glutamate + phosphate + 3 H2O + H(+). It catalyses the reaction L-glutamine + H2O = L-glutamate + NH4(+). It functions in the pathway cofactor biosynthesis; pyridoxal 5'-phosphate biosynthesis. Functionally, catalyzes the hydrolysis of glutamine to glutamate and ammonia as part of the biosynthesis of pyridoxal 5'-phosphate. The resulting ammonia molecule is channeled to the active site of PdxS. The chain is Pyridoxal 5'-phosphate synthase subunit PdxT from Thermococcus onnurineus (strain NA1).